Here is a 188-residue protein sequence, read N- to C-terminus: Protein TIFY 9 (188 aa).

The interval 20 to 41 (DADDRHAKSGGSSASSSSSIRG) is disordered. Positions 28–38 (SGGSSASSSSS) are enriched in low complexity. In terms of domain architecture, Tify spans 80–114 (AAAAAAPMTLFYNGSVAVFDVSHDKAEAIMRMATE). Positions 135-160 (PLTRTKSLQRFLSKRKERLTSLGPYQ) match the Jas motif. Positions 156–188 (LGPYQVGGPAAVGATTSTTTKSFLAKEEEHTAS) are disordered. A compositionally biased stretch (basic and acidic residues) spans 179–188 (LAKEEEHTAS).

Belongs to the TIFY/JAZ family. Post-translationally, ubiquitinated. Targeted for degradation by the SCF(COI1) E3 ubiquitin ligase-proteasome pathway during jasmonate signaling.

Its function is as follows. Repressor of jasmonate responses. The chain is Protein TIFY 9 from Oryza sativa subsp. indica (Rice).